Reading from the N-terminus, the 399-residue chain is Elongation factor Tu (399 aa).

The region spanning 10–204 (KPHVNIGTIG…AVDASIPEPE (195 aa)) is the tr-type G domain. The interval 19–26 (GHVDHGKT) is G1. 19–26 (GHVDHGKT) contacts GTP. Thr-26 provides a ligand contact to Mg(2+). The interval 60 to 64 (GITIN) is G2. The tract at residues 81–84 (DCPG) is G3. GTP contacts are provided by residues 81–85 (DCPGH) and 136–139 (NKCD). A G4 region spans residues 136-139 (NKCD). The tract at residues 174-176 (SGL) is G5.

Belongs to the TRAFAC class translation factor GTPase superfamily. Classic translation factor GTPase family. EF-Tu/EF-1A subfamily. Monomer.

It localises to the cytoplasm. It catalyses the reaction GTP + H2O = GDP + phosphate + H(+). GTP hydrolase that promotes the GTP-dependent binding of aminoacyl-tRNA to the A-site of ribosomes during protein biosynthesis. The polypeptide is Elongation factor Tu (Synechococcus sp. (strain CC9311)).